The chain runs to 553 residues: MSIRTLDGRTFAEMILAGAQNLSQNASAVDALNVFPVPDGDTGTNMNLSMTSGAREVEQMDTDDIGKVGSALSKGLLMGARGNSGVILSQLFRGFSKNIETKKEINALEFAAALQAGVDMAYKAVMKPVEGTILTVAKDAAKKAMILAEKETDITALMTAVTEEAEASLNRTPELLPVLKEVGVVDSGGKGLLCVYEGFLASLKGETVPQKAVLPSLDDMVSAEHHKSAQSMMNTEDIEFGFCTEVMVRLDQTKREFDEGTFRQDLSQFGDSLLVIADESLAKVHIHAEEPGNVLNYAQHYGELIKIKIENMREQHTSIISQESKPADNETPPAKQPYGIVTVAMGEGIADLFKSIGASVVIEGGQTMNPSTEDIVDAVKSVNADTVFILPNNSNIIMAANQAASVVDEQVFVIPAKTVPQGMSALLAFNPDQEAEANEANMLSAIQQVKSGQVTFSVRDTHIDGKDIKKGDFMGILNGTIIGTSENQLSAAKMLLSEMIGEDDEIVTILYGEDASQEEAEQLEAFLSEKYEEIEVEIHNGKQPLYSYIVSAE.

Positions 9–201 constitute a DhaL domain; sequence RTFAEMILAG…LLCVYEGFLA (193 aa).

The chain is Protein YloV (yloV) from Bacillus subtilis (strain 168).